The following is a 965-amino-acid chain: Vacuolar membrane protease (965 aa).

The Cytoplasmic portion of the chain corresponds to 1–16 (MARPSLSPSNPLGFTP). A helical membrane pass occupies residues 17-37 (WPVTVITAVVYLALVVPLLVV). At 38–387 (HHVVPSAPSS…SAFVVFELHT (350 aa)) the chain is on the vacuolar side. Residues N53 and N119 are each glycosylated (N-linked (GlcNAc...) asparagine). H171 and D183 together coordinate Zn(2+). The active-site Proton acceptor is E217. The Zn(2+) site is built by E218, E243, and H316. Residues 388-408 (LFALSVTLLVVAPLVLLVTSI) traverse the membrane as a helical segment. Topologically, residues 409–441 (ALARADKMYLFRSSASPEDSDGSEVVPLHGVRG) are cytoplasmic. A helical membrane pass occupies residues 442–462 (FFRFPFLLVIPTAVTVGLAYL). The Vacuolar portion of the chain corresponds to 463–472 (VTKFNPYIIH). A helical membrane pass occupies residues 473–493 (SSEYAVWSMMISAWVFLAWFV). At 494–507 (SRVADFARPSAFHR) the chain is on the cytoplasmic side. The chain crosses the membrane as a helical span at residues 508 to 528 (VYTLTWLFLVEWVFLVISTVY). The Vacuolar portion of the chain corresponds to 529 to 532 (ENQY). The chain crosses the membrane as a helical span at residues 533–553 (GLAGGYFVLFVFAGTFLATWI). Topologically, residues 554 to 661 (SYLELFALPR…WSIHLPKWVW (108 aa)) are cytoplasmic. The segment at 577–610 (RTSSHGSRLGTASGEDVEDGEDEDDDGTTAEATE) is disordered. The span at 591 to 604 (EDVEDGEDEDDDGT) shows a compositional bias: acidic residues. Residues 662-682 (VLQFLLTAPLVLIFVGPLALL) traverse the membrane as a helical segment. Over 683 to 698 (LTSALRQTGQDGSPSL) the chain is Vacuolar. The helical transmembrane segment at 699-719 (FIYIAVAALTTLLFIPLLPFI) threads the bilayer. The Cytoplasmic portion of the chain corresponds to 720–725 (HRYTHH). The chain crosses the membrane as a helical span at residues 726–746 (IPLFLLCVFAGTLIYNLVAFP). Over 747–965 (FSPANRLKLF…LVEGSRRFEV (219 aa)) the chain is Vacuolar. Residues N793 and N830 are each glycosylated (N-linked (GlcNAc...) asparagine).

The protein belongs to the peptidase M28 family. Zn(2+) is required as a cofactor.

It localises to the vacuole membrane. Its function is as follows. May be involved in vacuolar sorting and osmoregulation. The protein is Vacuolar membrane protease of Aspergillus fumigatus (strain CBS 144.89 / FGSC A1163 / CEA10) (Neosartorya fumigata).